An 89-amino-acid chain; its full sequence is UPF0223 protein Bcer98_2663 (89 aa).

The protein belongs to the UPF0223 family.

The sequence is that of UPF0223 protein Bcer98_2663 from Bacillus cytotoxicus (strain DSM 22905 / CIP 110041 / 391-98 / NVH 391-98).